A 232-amino-acid polypeptide reads, in one-letter code: Ribose-5-phosphate isomerase A (232 aa).

Substrate contacts are provided by residues 28 to 31, 83 to 86, and 96 to 99; these read TGST, DGAD, and KGGG. The active-site Proton acceptor is Glu105. Lys123 is a binding site for substrate.

The protein belongs to the ribose 5-phosphate isomerase family. As to quaternary structure, homodimer.

It catalyses the reaction aldehydo-D-ribose 5-phosphate = D-ribulose 5-phosphate. It participates in carbohydrate degradation; pentose phosphate pathway; D-ribose 5-phosphate from D-ribulose 5-phosphate (non-oxidative stage): step 1/1. In terms of biological role, catalyzes the reversible conversion of ribose-5-phosphate to ribulose 5-phosphate. In Rhodopseudomonas palustris (strain HaA2), this protein is Ribose-5-phosphate isomerase A.